The following is a 117-amino-acid chain: Hemerythrin subunit beta (117 aa).

Residues histidine 24, histidine 53, glutamate 57, histidine 72, histidine 76, histidine 105, and aspartate 110 each contribute to the Fe cation site.

Belongs to the hemerythrin family. In terms of assembly, octamer composed of two types of chains: alpha and beta.

Its function is as follows. Hemerythrin is a respiratory protein in blood cells of certain marine worms. The oxygen-binding site in each chain contains two iron atoms. This is Hemerythrin subunit beta from Lingula anatina (Brachiopod).